Here is a 398-residue protein sequence, read N- to C-terminus: MSPLKCMALAALGAVMFVGSAQAQTCDWPLWQNYAKRFVQDDGRVLNSSMKPTESSSEGQSYAMFFALVGNDRASFDKLWTWTKANMSGADIGQNLPGWLWGKKADNTWGVIDPNSASDADLWMAYALLEAARVWNAPQYRADAQLLLANVERNLIVRVPGLGKMLLPGPVGYVHAGGLWRFNPSYQVLAQLRRFHKERPNAGWNEVADSNAKMLADTASNPHGLAANWVGYRATSANTGLFVVDPFSDDLGSYDAIRTYMWAGMTAKGDPLAAPMLKSLGGMTRATAASATGYPPEKIHVLTGEVEKNNGYTPMGFSASTVAFFQARGETALAQLQKAKVDDALAKALAPSAPDTAQPIYYDYMLSLFSQGFADQKYRFEQDGTVKLSWEAACAVTR.

The N-terminal stretch at 1–23 (MSPLKCMALAALGAVMFVGSAQA) is a signal peptide. Glu-58 (proton donor) is an active-site residue. The Nucleophile role is filled by Asp-119.

Belongs to the glycosyl hydrolase 8 (cellulase D) family.

It is found in the secreted. The catalysed reaction is Endohydrolysis of (1-&gt;4)-beta-D-glucosidic linkages in cellulose, lichenin and cereal beta-D-glucans.. The protein operates within glycan metabolism; bacterial cellulose biosynthesis. Hydrolyzes carboxymethylcellulose. This chain is Endoglucanase (bcsZ), found in Pseudomonas fluorescens (strain SBW25).